A 123-amino-acid polypeptide reads, in one-letter code: Fluoride-specific ion channel FluC (123 aa).

4 helical membrane passes run 5 to 25 (IIAL…YISG), 35 to 55 (IGTL…YGLL), 67 to 87 (IFLG…SYET), and 100 to 120 (FANI…GFIL). The Na(+) site is built by Gly75 and Ser78.

This sequence belongs to the fluoride channel Fluc/FEX (TC 1.A.43) family.

The protein localises to the cell membrane. The catalysed reaction is fluoride(in) = fluoride(out). With respect to regulation, na(+) is not transported, but it plays an essential structural role and its presence is essential for fluoride channel function. Fluoride-specific ion channel. Important for reducing fluoride concentration in the cell, thus reducing its toxicity. The chain is Fluoride-specific ion channel FluC from Pyrococcus horikoshii (strain ATCC 700860 / DSM 12428 / JCM 9974 / NBRC 100139 / OT-3).